The primary structure comprises 260 residues: NH(3)-dependent NAD(+) synthetase (260 aa).

An ATP-binding site is contributed by 31-38; that stretch reads GLSGGLDS. Asp37 contacts Mg(2+). Arg112 provides a ligand contact to deamido-NAD(+). Residue Thr132 coordinates ATP. Glu137 serves as a coordination point for Mg(2+). Lys161 and Ser183 together coordinate ATP.

Belongs to the NAD synthetase family. As to quaternary structure, homodimer.

It carries out the reaction deamido-NAD(+) + NH4(+) + ATP = AMP + diphosphate + NAD(+) + H(+). It participates in cofactor biosynthesis; NAD(+) biosynthesis; NAD(+) from deamido-NAD(+) (ammonia route): step 1/1. Catalyzes the ATP-dependent amidation of deamido-NAD to form NAD. Uses ammonia as a nitrogen source. The polypeptide is NH(3)-dependent NAD(+) synthetase (Helicobacter pylori (strain J99 / ATCC 700824) (Campylobacter pylori J99)).